The sequence spans 531 residues: Polyamine transporter PUT1 (531 aa).

The disordered stretch occupies residues M1–M76. The segment covering S17 to L33 has biased composition (low complexity). Over residues G34–T44 the composition is skewed to basic and acidic residues. The next 12 membrane-spanning stretches (helical) occupy residues V83–I103, L113–I133, Y147–K167, L193–L213, V224–L244, W262–G284, A296–T316, A341–A361, T391–F411, I414–I434, T453–L473, and L476–L496.

Belongs to the amino acid-polyamine-organocation (APC) superfamily. Polyamine:cation symporter (PHS) (TC 2.A.3.12) family. As to expression, expressed in seedling roots, leaves, stems, flowers and siliques.

It localises to the cell membrane. Its function is as follows. Cell membrane polyamine/proton symporter involved in the polyamine uptake in cells. Possesses high affinity for spermidine and lower affinity for spermine and putrescine. Transports paraquat, a polyamine analog, and thus confers sensitivity to this chemical which is used as a herbicide. This chain is Polyamine transporter PUT1 (PUT1), found in Oryza sativa subsp. japonica (Rice).